The sequence spans 286 residues: 4-diphosphocytidyl-2-C-methyl-D-erythritol kinase (286 aa).

Residue Lys-11 is part of the active site. 93–103 (PFGAGLGGGSS) provides a ligand contact to ATP. The active site involves Asp-135.

This sequence belongs to the GHMP kinase family. IspE subfamily.

The enzyme catalyses 4-CDP-2-C-methyl-D-erythritol + ATP = 4-CDP-2-C-methyl-D-erythritol 2-phosphate + ADP + H(+). It functions in the pathway isoprenoid biosynthesis; isopentenyl diphosphate biosynthesis via DXP pathway; isopentenyl diphosphate from 1-deoxy-D-xylulose 5-phosphate: step 3/6. Catalyzes the phosphorylation of the position 2 hydroxy group of 4-diphosphocytidyl-2C-methyl-D-erythritol. The sequence is that of 4-diphosphocytidyl-2-C-methyl-D-erythritol kinase from Chlorobaculum tepidum (strain ATCC 49652 / DSM 12025 / NBRC 103806 / TLS) (Chlorobium tepidum).